The primary structure comprises 351 residues: MSKLWSPIVAALKPYVPGEQPRMADLVKLNTNESPYGPSEKALGAIRAAADTDLRLYPDPVALGLRQAIAARHQVSVGEVFVGNGSDEVLAHTFAALLKHDRPLLFPDISYSFYTTYAGLFGIEAVEVPLDAAFRIDIADYRRPSGAVILPNPNAPTGIGLPLAEIERLVADHPGQPVVIDEAYIDFGGESAIALVPKYDNLLVVQTFSKSRALAGLRVGFAIGQRPLIEALERVKDSFNSYPLGRAAQAGATAAIEDEAWFEATRGKIIASRAKLTSELEKRGFEVLPSQANFVFARHPGHAGQTLAAKLRERAVIVRHFAKPRIADFLRITIGTDAECAKLVAALDEVL.

Lysine 210 carries the N6-(pyridoxal phosphate)lysine modification.

Belongs to the class-II pyridoxal-phosphate-dependent aminotransferase family. Histidinol-phosphate aminotransferase subfamily. Homodimer. Pyridoxal 5'-phosphate is required as a cofactor.

The catalysed reaction is L-histidinol phosphate + 2-oxoglutarate = 3-(imidazol-4-yl)-2-oxopropyl phosphate + L-glutamate. It functions in the pathway amino-acid biosynthesis; L-histidine biosynthesis; L-histidine from 5-phospho-alpha-D-ribose 1-diphosphate: step 7/9. This is Histidinol-phosphate aminotransferase 2 (hisC2) from Rhizobium meliloti (strain 1021) (Ensifer meliloti).